Here is a 461-residue protein sequence, read N- to C-terminus: Photosystem II CP43 reaction center protein (461 aa).

The propeptide occupies 1–2 (ME). Threonine 3 bears the N-acetylthreonine mark. Threonine 3 carries the phosphothreonine modification. The next 5 membrane-spanning stretches (helical) occupy residues 57–81 (LFEV…PHIA), 122–143 (LIGP…KDKN), 166–188 (KAMY…RIIS), 243–263 (KPWG…LSYS), and 279–300 (WFNN…ASQA). Residue glutamate 355 participates in [CaMn4O5] cluster binding. A helical transmembrane segment spans residues 435-459 (RARAAAAGFEKGIDRDTEPVLSMKP).

Belongs to the PsbB/PsbC family. PsbC subfamily. As to quaternary structure, PSII is composed of 1 copy each of membrane proteins PsbA, PsbB, PsbC, PsbD, PsbE, PsbF, PsbH, PsbI, PsbJ, PsbK, PsbL, PsbM, PsbT, PsbX, PsbY, PsbZ, Psb30/Ycf12, at least 3 peripheral proteins of the oxygen-evolving complex and a large number of cofactors. It forms dimeric complexes. Binds multiple chlorophylls and provides some of the ligands for the Ca-4Mn-5O cluster of the oxygen-evolving complex. It may also provide a ligand for a Cl- that is required for oxygen evolution. PSII binds additional chlorophylls, carotenoids and specific lipids. is required as a cofactor.

The protein localises to the plastid. It is found in the chloroplast thylakoid membrane. One of the components of the core complex of photosystem II (PSII). It binds chlorophyll and helps catalyze the primary light-induced photochemical processes of PSII. PSII is a light-driven water:plastoquinone oxidoreductase, using light energy to abstract electrons from H(2)O, generating O(2) and a proton gradient subsequently used for ATP formation. The polypeptide is Photosystem II CP43 reaction center protein (Oltmannsiellopsis viridis (Marine flagellate)).